Reading from the N-terminus, the 38-residue chain is Kappa-theraphotoxin-Hm2a (38 aa).

3 disulfides stabilise this stretch: Cys-2-Cys-16, Cys-9-Cys-21, and Cys-15-Cys-32. Residue Phe-38 is modified to Phenylalanine amide.

The protein belongs to the neurotoxin 10 (Hwtx-1) family. 13 (Hntx-13) subfamily. Expressed by the venom gland.

The protein localises to the secreted. Inhibitor of voltage-gated potassium channels. It specifically inhibits Kv2.1/KCNB1 channels. The protein is Kappa-theraphotoxin-Hm2a of Heteroscodra maculata (Togo starburst tarantula).